Here is a 548-residue protein sequence, read N- to C-terminus: Hydroxylamine reductase (548 aa).

Residues Cys3, Cys6, Cys15, and Cys21 each coordinate [4Fe-4S] cluster. Hybrid [4Fe-2O-2S] cluster-binding residues include His239, Glu263, Cys307, Cys401, Cys429, Cys454, Glu489, and Lys491. Cys401 carries the cysteine persulfide modification.

It belongs to the HCP family. The cofactor is [4Fe-4S] cluster. It depends on hybrid [4Fe-2O-2S] cluster as a cofactor.

The protein localises to the cytoplasm. The enzyme catalyses A + NH4(+) + H2O = hydroxylamine + AH2 + H(+). In terms of biological role, catalyzes the reduction of hydroxylamine to form NH(3) and H(2)O. The protein is Hydroxylamine reductase of Desulfosudis oleivorans (strain DSM 6200 / JCM 39069 / Hxd3) (Desulfococcus oleovorans).